The sequence spans 477 residues: Proline--tRNA ligase (477 aa).

It belongs to the class-II aminoacyl-tRNA synthetase family. ProS type 3 subfamily. As to quaternary structure, homodimer.

Its subcellular location is the cytoplasm. The catalysed reaction is tRNA(Pro) + L-proline + ATP = L-prolyl-tRNA(Pro) + AMP + diphosphate. Its function is as follows. Catalyzes the attachment of proline to tRNA(Pro) in a two-step reaction: proline is first activated by ATP to form Pro-AMP and then transferred to the acceptor end of tRNA(Pro). In Methanocorpusculum labreanum (strain ATCC 43576 / DSM 4855 / Z), this protein is Proline--tRNA ligase.